The sequence spans 814 residues: Leucine--tRNA ligase (814 aa).

The 'HIGH' region signature appears at 42–52 (PYPSGNLHIGH). The 'KMSKS' region signature appears at 582-586 (KMSKS). Residue Lys585 participates in ATP binding.

The protein belongs to the class-I aminoacyl-tRNA synthetase family.

The protein resides in the cytoplasm. The enzyme catalyses tRNA(Leu) + L-leucine + ATP = L-leucyl-tRNA(Leu) + AMP + diphosphate. This chain is Leucine--tRNA ligase, found in Herpetosiphon aurantiacus (strain ATCC 23779 / DSM 785 / 114-95).